We begin with the raw amino-acid sequence, 253 residues long: Leucyl/phenylalanyl-tRNA--protein transferase (253 aa).

This sequence belongs to the L/F-transferase family.

The protein localises to the cytoplasm. It catalyses the reaction N-terminal L-lysyl-[protein] + L-leucyl-tRNA(Leu) = N-terminal L-leucyl-L-lysyl-[protein] + tRNA(Leu) + H(+). The enzyme catalyses N-terminal L-arginyl-[protein] + L-leucyl-tRNA(Leu) = N-terminal L-leucyl-L-arginyl-[protein] + tRNA(Leu) + H(+). It carries out the reaction L-phenylalanyl-tRNA(Phe) + an N-terminal L-alpha-aminoacyl-[protein] = an N-terminal L-phenylalanyl-L-alpha-aminoacyl-[protein] + tRNA(Phe). Its function is as follows. Functions in the N-end rule pathway of protein degradation where it conjugates Leu, Phe and, less efficiently, Met from aminoacyl-tRNAs to the N-termini of proteins containing an N-terminal arginine or lysine. The chain is Leucyl/phenylalanyl-tRNA--protein transferase from Bordetella petrii (strain ATCC BAA-461 / DSM 12804 / CCUG 43448).